A 207-amino-acid chain; its full sequence is Holliday junction resolvase RecU (207 aa).

Residues 1 to 30 form a disordered region; it reads MPIRYPNGQPYSRSPKQGQAKKPLPADTYS. Positions 87, 89, 102, and 121 each coordinate Mg(2+).

The protein belongs to the RecU family. Mg(2+) is required as a cofactor.

The protein resides in the cytoplasm. The catalysed reaction is Endonucleolytic cleavage at a junction such as a reciprocal single-stranded crossover between two homologous DNA duplexes (Holliday junction).. Functionally, endonuclease that resolves Holliday junction intermediates in genetic recombination. Cleaves mobile four-strand junctions by introducing symmetrical nicks in paired strands. Promotes annealing of linear ssDNA with homologous dsDNA. Required for DNA repair, homologous recombination and chromosome segregation. The polypeptide is Holliday junction resolvase RecU (Shouchella clausii (strain KSM-K16) (Alkalihalobacillus clausii)).